A 473-amino-acid chain; its full sequence is Argininosuccinate lyase (473 aa).

This sequence belongs to the lyase 1 family. Argininosuccinate lyase subfamily.

Its subcellular location is the cytoplasm. The enzyme catalyses 2-(N(omega)-L-arginino)succinate = fumarate + L-arginine. It functions in the pathway amino-acid biosynthesis; L-arginine biosynthesis; L-arginine from L-ornithine and carbamoyl phosphate: step 3/3. This is Argininosuccinate lyase from Chelativorans sp. (strain BNC1).